Here is a 93-residue protein sequence, read N- to C-terminus: Small ribosomal subunit protein uS15 (93 aa).

It belongs to the universal ribosomal protein uS15 family. As to quaternary structure, part of the 30S ribosomal subunit. Forms a bridge to the 50S subunit in the 70S ribosome, contacting the 23S rRNA.

In terms of biological role, one of the primary rRNA binding proteins, it binds directly to 16S rRNA where it helps nucleate assembly of the platform of the 30S subunit by binding and bridging several RNA helices of the 16S rRNA. Its function is as follows. Forms an intersubunit bridge (bridge B4) with the 23S rRNA of the 50S subunit in the ribosome. The protein is Small ribosomal subunit protein uS15 of Ehrlichia canis (strain Jake).